The sequence spans 68 residues: Ferredoxin Fdx (68 aa).

[3Fe-4S] cluster-binding residues include cysteine 12, glutamine 13, alanine 16, cysteine 18, and cysteine 56.

The cofactor is [3Fe-4S] cluster.

Its function is as follows. Ferredoxin that is the redox partner of cytochrome CYP51, a sterol 14alpha-demethylase encoded by an adjacent gene. The protein is Ferredoxin Fdx of Mycobacterium tuberculosis (strain ATCC 25618 / H37Rv).